Here is a 287-residue protein sequence, read N- to C-terminus: Probable glucose uptake protein GlcU (287 aa).

9 consecutive transmembrane segments (helical) span residues 7–29 (LIAL…VGGG), 34–56 (IRGT…FAKF), 58–75 (NPTV…WAFG), 114–136 (WSSM…GVAL), 156–178 (MGIL…IFGV), 183–202 (ALFF…SMNH), 209–228 (TALN…FMFY), 233–255 (VGVA…GGIF), and 267–286 (TGIW…LGNL).

Belongs to the GRP transporter (TC 2.A.7.5) family.

Its subcellular location is the cell membrane. Involved in the uptake of glucose. In Staphylococcus aureus (strain MRSA252), this protein is Probable glucose uptake protein GlcU (glcU).